The chain runs to 460 residues: Muscarinic acetylcholine receptor M1 (460 aa).

Residues 1-22 (MNTSAPPAVSPNITVLAPGKGP) lie on the Extracellular side of the membrane. N-linked (GlcNAc...) asparagine glycans are attached at residues Asn-2 and Asn-12. The chain crosses the membrane as a helical span at residues 23–48 (WQVAFIGITTGLLSLATVTGNLLVLI). The Cytoplasmic portion of the chain corresponds to 49–62 (SFKVNTELKTVNNY). A helical membrane pass occupies residues 63-84 (FLLSLACADLIIGTFSMNLYTT). Residues 85-95 (YLLMGHWALGT) lie on the Extracellular side of the membrane. Residues 96–121 (LACDLWLALDYVASNASVMNLLLISF) traverse the membrane as a helical segment. A disulfide bond links Cys-98 and Cys-178. The Cytoplasmic segment spans residues 122 to 142 (DRYFSVTRPLSYRAKRTPRRA). A helical transmembrane segment spans residues 143-164 (ALMIGLAWLVSFVLWAPAILFW). Residues 165–185 (QYLVGERTVLAGQCYIQFLSQ) are Extracellular-facing. Residues 186–209 (PIITFGTAMAAFYLPVTVMCTLYW) form a helical membrane-spanning segment. Residues 210-366 (RIYRETESRA…LVKEKKAART (157 aa)) lie on the Cytoplasmic side of the membrane. Disordered stretches follow at residues 225-256 (LQGS…GTPP), 274-297 (WKEE…EEPG), and 310-351 (EAQA…QLAK). Thr-230 bears the Phosphothreonine mark. Low complexity predominate over residues 238–247 (SSSSERSQPG). Positions 328–343 (RPTKKGRDRAGKGQKP) are enriched in basic residues. Residues 367–390 (LSAILLAFILTWTPYNIMVLVSTF) form a helical membrane-spanning segment. Topologically, residues 391–397 (CKDCVPE) are extracellular. The chain crosses the membrane as a helical span at residues 398-420 (TLWELGYWLCYVNSTINPMCYAL). The Cytoplasmic segment spans residues 421-460 (CNKAFRDTFRLLLLCRWDKRRWRKIPKRPGSVHRTPSRQC). The residue at position 428 (Thr-428) is a Phosphothreonine. A Phosphoserine modification is found at Ser-451. Residue Thr-455 is modified to Phosphothreonine. Ser-457 carries the post-translational modification Phosphoserine.

The protein belongs to the G-protein coupled receptor 1 family. Muscarinic acetylcholine receptor subfamily. CHRM1 sub-subfamily. As to quaternary structure, interacts with GPRASP2. Interacts with TMEM147.

The protein localises to the cell membrane. It is found in the postsynaptic cell membrane. The muscarinic acetylcholine receptor mediates various cellular responses, including inhibition of adenylate cyclase, breakdown of phosphoinositides and modulation of potassium channels through the action of G proteins. Primary transducing effect is Pi turnover. This Pongo abelii (Sumatran orangutan) protein is Muscarinic acetylcholine receptor M1 (CHRM1).